The chain runs to 319 residues: Acetyl-coenzyme A carboxylase carboxyl transferase subunit alpha (319 aa).

One can recognise a CoA carboxyltransferase C-terminal domain in the interval 35-296; sequence NIDEEVHRLR…KTQLLADLAD (262 aa).

Belongs to the AccA family. In terms of assembly, acetyl-CoA carboxylase is a heterohexamer composed of biotin carboxyl carrier protein (AccB), biotin carboxylase (AccC) and two subunits each of ACCase subunit alpha (AccA) and ACCase subunit beta (AccD).

The protein resides in the cytoplasm. It carries out the reaction N(6)-carboxybiotinyl-L-lysyl-[protein] + acetyl-CoA = N(6)-biotinyl-L-lysyl-[protein] + malonyl-CoA. It functions in the pathway lipid metabolism; malonyl-CoA biosynthesis; malonyl-CoA from acetyl-CoA: step 1/1. Functionally, component of the acetyl coenzyme A carboxylase (ACC) complex. First, biotin carboxylase catalyzes the carboxylation of biotin on its carrier protein (BCCP) and then the CO(2) group is transferred by the carboxyltransferase to acetyl-CoA to form malonyl-CoA. This is Acetyl-coenzyme A carboxylase carboxyl transferase subunit alpha from Cronobacter sakazakii (strain ATCC BAA-894) (Enterobacter sakazakii).